The following is a 617-amino-acid chain: Neopullulanase SusA (617 aa).

Residues 1–22 form the signal peptide; the sequence is MKRNLLFIILLLLLPGLHQVFA. Residues N138, N143, D144, G164, and D166 each coordinate Ca(2+). Active-site residues include D331 and E360.

The protein belongs to the glycosyl hydrolase 13 family. Requires Ca(2+) as cofactor.

It is found in the periplasm. The enzyme catalyses Hydrolysis of pullulan to panose (6-alpha-D-glucosylmaltose).. It participates in glycan degradation; starch degradation. Its function is as follows. Neopullulanase that cleaves 1,4-alpha-glucosidic linkages in starch to produce disaccharides or trisaccharides in starch degradation. This is Neopullulanase SusA (susA) from Bacteroides thetaiotaomicron (strain ATCC 29148 / DSM 2079 / JCM 5827 / CCUG 10774 / NCTC 10582 / VPI-5482 / E50).